The sequence spans 333 residues: Replication factor C subunit 2 (333 aa).

An N-acetylalanine modification is found at A2. 55–62 (GPPGTGKT) contributes to the ATP binding site.

This sequence belongs to the activator 1 small subunits family. Heterotetramer of subunits RFC2, RFC3, RFC4 and RFC5 that can form a complex with RFC1.

Its subcellular location is the nucleus. Functionally, may be involved in DNA replication and thus regulate cell proliferation. This is Replication factor C subunit 2 (RFC2) from Arabidopsis thaliana (Mouse-ear cress).